Consider the following 356-residue polypeptide: Phosphate acyltransferase (356 aa).

Belongs to the PlsX family. In terms of assembly, homodimer. Probably interacts with PlsY.

It localises to the cytoplasm. It carries out the reaction a fatty acyl-[ACP] + phosphate = an acyl phosphate + holo-[ACP]. It functions in the pathway lipid metabolism; phospholipid metabolism. Its function is as follows. Catalyzes the reversible formation of acyl-phosphate (acyl-PO(4)) from acyl-[acyl-carrier-protein] (acyl-ACP). This enzyme utilizes acyl-ACP as fatty acyl donor, but not acyl-CoA. The chain is Phosphate acyltransferase from Mesorhizobium japonicum (strain LMG 29417 / CECT 9101 / MAFF 303099) (Mesorhizobium loti (strain MAFF 303099)).